A 191-amino-acid chain; its full sequence is Guanylate kinase (191 aa).

In terms of domain architecture, Guanylate kinase-like spans G8–V188. G15–S22 lines the ATP pocket.

Belongs to the guanylate kinase family.

It localises to the cytoplasm. The catalysed reaction is GMP + ATP = GDP + ADP. Essential for recycling GMP and indirectly, cGMP. The chain is Guanylate kinase from Corynebacterium diphtheriae (strain ATCC 700971 / NCTC 13129 / Biotype gravis).